The following is a 55-amino-acid chain: Neurotoxin B-II (55 aa).

The residue at position 10 (Pro10) is a Hydroxyproline. Disulfide bonds link Cys12–Cys48, Cys16–Cys52, Cys23–Cys41, and Cys26–Cys37.

It belongs to the worm B-toxin family.

The protein resides in the secreted. In terms of biological role, this toxin increases the excitability of nerves by delaying the inactivation of the voltage-gated sodium channel (Nav). Only acts on some crustacean. Neurotoxin B-II is less abundant, but 15-fold more toxic than neurotoxin B-VI. This Cerebratulus lacteus (Milky ribbon worm) protein is Neurotoxin B-II.